A 140-amino-acid chain; its full sequence is Small ribosomal subunit protein bS6 (140 aa).

A disordered region spans residues 111–140; it reads EHFTGPAGAEGSDDESTESTDEAVAETADA. Over residues 121-140 the composition is skewed to acidic residues; that stretch reads GSDDESTESTDEAVAETADA.

Belongs to the bacterial ribosomal protein bS6 family.

Binds together with bS18 to 16S ribosomal RNA. This is Small ribosomal subunit protein bS6 from Rhodopirellula baltica (strain DSM 10527 / NCIMB 13988 / SH1).